Here is a 422-residue protein sequence, read N- to C-terminus: Tyrosine-protein kinase STYK1 (422 aa).

The helical transmembrane segment at 26–46 threads the bilayer; the sequence is VIIVPTLLVTIFLILLGVILW. One can recognise a Protein kinase domain in the interval 114–384; that stretch reads SEVLEQICSG…ELRLRLEAAI (271 aa). ATP-binding positions include 120-128 and lysine 147; that span reads ICSGSCGPI. Catalysis depends on aspartate 251, which acts as the Proton acceptor.

Belongs to the protein kinase superfamily. Tyr protein kinase family. As to expression, widely expressed. Highly expressed in brain, placenta and prostate. Expressed in tumor cells such as hepatoma cells L-02, cervix carcinoma cells HeLa, ovary cancer cells Ho8910 and chronic myelogenous leukemia cells K-562, but not in other tumor cells such as epidermoid carcinoma (A-431). Undetectable in most normal lung tissues, widely expressed in lung cancers.

Its subcellular location is the membrane. It catalyses the reaction L-tyrosyl-[protein] + ATP = O-phospho-L-tyrosyl-[protein] + ADP + H(+). Its function is as follows. Probable tyrosine protein-kinase, which has strong transforming capabilities on a variety of cell lines. When overexpressed, it can also induce tumor cell invasion as well as metastasis in distant organs. May act by activating both MAP kinase and phosphatidylinositol 3'-kinases (PI3K) pathways. The chain is Tyrosine-protein kinase STYK1 (STYK1) from Homo sapiens (Human).